A 648-amino-acid polypeptide reads, in one-letter code: SRSF protein kinase 1 (648 aa).

Residues 1–57 (MERKVLALQARKKRTKAKKDKAQRKPETQHRGSAPHSESDIPEQEEEILGSDDDEQE) are disordered. Basic residues predominate over residues 10–22 (ARKKRTKAKKDKA). Positions 40–57 (DIPEQEEEILGSDDDEQE) are enriched in acidic residues. Ser-51 carries the phosphoserine modification. The region spanning 80 to 646 (YHVIRKLGWG…AAECLRHPWL (567 aa)) is the Protein kinase domain. ATP contacts are provided by residues 86 to 94 (LGWGHFSTV) and Lys-109. Asp-213 serves as the catalytic Proton acceptor. Disordered stretches follow at residues 238-354 (WQRS…APEI) and 395-464 (PSFL…DSKG). Residues 265 to 276 (KNKKKKLKKKQK) show a composition bias toward basic residues. Basic and acidic residues-rich tracts occupy residues 277–288 (RQAELLEKRMQE) and 304–317 (NKQE…DRPL). Phosphoserine occurs at positions 309, 311, and 333. Polar residues-rich tracts occupy residues 333–343 (SNSIGQDQTLT) and 396–441 (SFLN…TQLE). Phosphothreonine is present on Thr-448. The residue at position 450 (Ser-450) is a Phosphoserine. The residue at position 548 (Ser-548) is a Phosphoserine; by CK2.

This sequence belongs to the protein kinase superfamily. CMGC Ser/Thr protein kinase family. As to quaternary structure, monomer. Found in a multisubunit complex containing seven proteins, named toposome, which separates entangled circular chromatin DNA during chromosome segregation. Interacts with HHV-1 ICP27 protein. Interacts with DNAJC8 and AHSA1/AHA1 and this mediates formation of a complex with the Hsp70 /Hsp90 machinery. Binds to IGF2BP1, SYNCRIP, HNRNPA2B1 and HNRNPC. Interacts with SAFB/SAFB1 and SAFB2 which inhibits its activity. The cofactor is Mg(2+). Predominantly expressed in the testis but is also present at lower levels in heart, spleen, liver, brain, kidney, lung and skeletal muscle. Present in all germinal cells in the seminiferous tubules but not in mature spermatozoa.

It is found in the cytoplasm. The protein localises to the nucleus. It localises to the nucleoplasm. The protein resides in the nucleus matrix. Its subcellular location is the microsome. It is found in the nucleus speckle. The protein localises to the chromosome. The enzyme catalyses L-seryl-[protein] + ATP = O-phospho-L-seryl-[protein] + ADP + H(+). It carries out the reaction L-threonyl-[protein] + ATP = O-phospho-L-threonyl-[protein] + ADP + H(+). Activated by phosphorylation on Ser-51 and Ser-548. Its function is as follows. Serine/arginine-rich protein-specific kinase which specifically phosphorylates its substrates at serine residues located in regions rich in arginine/serine dipeptides, known as RS domains and is involved in the phosphorylation of SR splicing factors and the regulation of splicing. Plays a central role in the regulatory network for splicing, controlling the intranuclear distribution of splicing factors in interphase cells and the reorganization of nuclear speckles during mitosis. Can influence additional steps of mRNA maturation, as well as other cellular activities, such as chromatin reorganization in somatic and sperm cells and cell cycle progression. Phosphorylates SFRS2, ZRSR2, LBR and PRM1. Phosphorylates SRSF1 using a directional (C-terminal to N-terminal) and a dual-track mechanism incorporating both processive phosphorylation (in which the kinase stays attached to the substrate after each round of phosphorylation) and distributive phosphorylation steps (in which the kinase and substrate dissociate after each phosphorylation event). The RS domain of SRSF1 binds first to a docking groove in the large lobe of the kinase domain of SRPK1. This induces certain structural changes in SRPK1 and/or RRM2 domain of SRSF1, allowing RRM2 to bind the kinase and initiate phosphorylation. The cycles continue for several phosphorylation steps in a processive manner (steps 1-8) until the last few phosphorylation steps (approximately steps 9-12). During that time, a mechanical stress induces the unfolding of the beta-4 motif in RRM2, which then docks at the docking groove of SRPK1. This also signals RRM2 to begin to dissociate, which facilitates SRSF1 dissociation after phosphorylation is completed. Can mediate hepatitis B virus (HBV) core protein phosphorylation. It plays a negative role in the regulation of HBV replication through a mechanism not involving the phosphorylation of the core protein but by reducing the packaging efficiency of the pregenomic RNA (pgRNA) without affecting the formation of the viral core particles. Can induce splicing of exon 10 in MAPT/TAU. The sequence is that of SRSF protein kinase 1 from Mus musculus (Mouse).